The sequence spans 212 residues: MPQTDKQVCIPPELPELLKQFTKAAIRTQPPDLIQWAAEYFGAMSRGEIPPVRERSEQVPLSNWAELTPELLKVLHSRVGGRLIIHADELAQMWKVLNLPTDLFNSVMNVGRFTEEIEWLKFLALACSSLGVTIAKTLKIVCEVLSCDHDGGPPRIPFSTFQFLYTYIAEVDGEISSSHVTRMLNYIEQEVIGPDGLIKVNDFTQNPRVRLE.

An RIIa domain is found at 12-43 (PELPELLKQFTKAAIRTQPPDLIQWAAEYFGA). S56 is modified (phosphoserine). An interaction with RHPN1 region spans residues 209-212 (VRLE).

The protein belongs to the ropporin family. As to quaternary structure, homodimer. Interacts with AKAP3. May interact with SPA17. Interacts with RHPN1. Interacts with FSCB; the interaction increases upon spermatozoa capacitation conditions. Interacts with CFAP61. Post-translationally, sumoylated, sumoylation decreases upon spermatozoa capacitation conditions.

It localises to the cell projection. The protein resides in the cilium. The protein localises to the flagellum. Functionally, important for male fertility. With ROPN1L, involved in fibrous sheath integrity and sperm motility, plays a role in PKA-dependent signaling processes required for spermatozoa capacitation. The polypeptide is Ropporin-1 (Ropn1) (Rattus norvegicus (Rat)).